The primary structure comprises 539 residues: Copine-C (539 aa).

C2 domains are found at residues 1–120 (MIPS…KIVA) and 128–251 (VTGK…PLIN). Residues L23, D24, D30, D83, D85, and D98 each contribute to the Ca(2+) site. In terms of domain architecture, VWFA spans 290 to 507 (SLMTAIDCTG…ALAQETLKEI (218 aa)).

The protein belongs to the copine family. Requires Ca(2+) as cofactor.

The sequence is that of Copine-C (cpnC) from Dictyostelium discoideum (Social amoeba).